Consider the following 385-residue polypeptide: Prostacyclin receptor (385 aa).

Over 1–16 (MADSCRNLTYVRDSVG) the chain is Extracellular. 2 cysteine pairs are disulfide-bonded: cysteine 5–cysteine 165 and cysteine 92–cysteine 170. An N-linked (GlcNAc...) asparagine glycan is attached at asparagine 7. The helical transmembrane segment at 17–38 (PATSTLMFVAGVVGNGLALGIL) threads the bilayer. Residues 39–51 (GARRHSRPSAFAV) are Cytoplasmic-facing. Residues 52-76 (LVTGLGVTDLLGTCFLSPAVFAAYA) traverse the membrane as a helical segment. The Extracellular portion of the chain corresponds to 77 to 94 (RNSSLLGLARGRPALCDA). A helical transmembrane segment spans residues 95–115 (FAFAMTFFGLASTLILFAMAV). The Cytoplasmic portion of the chain corresponds to 116–134 (ERCLALSHPYLYAQLDGPR). A helical transmembrane segment spans residues 135–158 (RARLALPAIYAFCTIFCSLPFLGL). Residues 159 to 181 (GQHQQYCPGSWCFIRMRSAEPGG) are Extracellular-facing. A helical membrane pass occupies residues 182-208 (CAFLLAYASLVALLVAAIVLCNGSVTL). The Cytoplasmic segment spans residues 209 to 234 (SLCRMYRQQRRHQARCPRPRAGEDEV). A helical transmembrane segment spans residues 235–259 (DHLILLALMTGIMAVCSLPLTPQIR). At 260-273 (GFTQAIAPDSSEMG) the chain is on the extracellular side. A helical transmembrane segment spans residues 274–294 (DLLAFRFNAFNPILDPWVFIL). Residues 295–385 (FRKSVFQRLK…AGSEAACSLC (91 aa)) lie on the Cytoplasmic side of the membrane. Residues 315–344 (AQGDSRTSLSQSASGRKDSSAPPALEGKKG) are disordered. Polar residues predominate over residues 318 to 328 (DSRTSLSQSAS). At cysteine 382 the chain carries Cysteine methyl ester. Cysteine 382 is lipidated: S-farnesyl cysteine. A propeptide spans 383–385 (SLC) (removed in mature form).

It belongs to the G-protein coupled receptor 1 family. Interacts (non-isoprenylated C-terminus) with PDZK1. Post-translationally, isoprenylation does not influence ligand binding but is required for efficient coupling to the effectors adenylyl cyclase and phospholipase C.

The protein localises to the cell membrane. Functionally, receptor for prostacyclin (prostaglandin I2 or PGI2). The activity of this receptor is mediated by G(s) proteins which activate adenylate cyclase. The sequence is that of Prostacyclin receptor (PTGIR) from Bos taurus (Bovine).